The sequence spans 143 residues: Crossover junction endodeoxyribonuclease Hjc (143 aa).

E11 is a binding site for Mg(2+). Residue S31 is part of the active site. The Mg(2+) site is built by D41 and E54.

The protein belongs to the Holliday junction resolvase Hjc family. As to quaternary structure, homodimer. It depends on Mg(2+) as a cofactor.

The catalysed reaction is Endonucleolytic cleavage at a junction such as a reciprocal single-stranded crossover between two homologous DNA duplexes (Holliday junction).. Functionally, a structure-specific endonuclease that resolves Holliday junction (HJ) intermediates during genetic recombination. Cleaves 4-way DNA junctions introducing paired nicks in opposing strands, leaving a 5'-terminal phosphate and a 3'-terminal hydroxyl group that are ligated to produce recombinant products. Redundant function with Holliday junction resolvase Hje. The protein is Crossover junction endodeoxyribonuclease Hjc of Sulfolobus acidocaldarius (strain ATCC 33909 / DSM 639 / JCM 8929 / NBRC 15157 / NCIMB 11770).